Consider the following 492-residue polypeptide: Putative protein disulfide-isomerase C1F5.02 (492 aa).

Positions 1 to 22 are cleaved as a signal peptide; that stretch reads MKISNLLAAFLAFSGGFFCASA. A Thioredoxin 1 domain is found at 23–128; that stretch reads EVPKVNKEGL…LVKYMRKQLL (106 aa). Active-site nucleophile residues include Cys-51 and Cys-54. A disulfide bridge connects residues Cys-51 and Cys-54. 2 N-linked (GlcNAc...) asparagine glycosylation sites follow: Asn-161 and Asn-257. Residues 323-462 form the Thioredoxin 2 domain; sequence ELTAKAMTKF…LSAFIDKHAS (140 aa). Residues Cys-385 and Cys-388 each act as nucleophile in the active site. Residues Cys-385 and Cys-388 are joined by a disulfide bond. The interval 468–492 is disordered; sequence KEKESVPAPDLEDQVAVEDEMADEL. Positions 477–492 are enriched in acidic residues; that stretch reads DLEDQVAVEDEMADEL. Positions 489–492 match the Prevents secretion from ER motif; the sequence is ADEL.

It belongs to the protein disulfide isomerase family.

The protein localises to the endoplasmic reticulum lumen. The catalysed reaction is Catalyzes the rearrangement of -S-S- bonds in proteins.. Participates in the folding of proteins containing disulfide bonds, may be involved in glycosylation, prolyl hydroxylation and triglyceride transfer. The polypeptide is Putative protein disulfide-isomerase C1F5.02 (Schizosaccharomyces pombe (strain 972 / ATCC 24843) (Fission yeast)).